The chain runs to 63 residues: MAIFNNISKNSLNIKSNNLIINQNFNQNLNHTQNNITRMYTSSKWVYVSFYYERNSCSLGSYY.

This is an uncharacterized protein from Dictyostelium discoideum (Social amoeba).